A 418-amino-acid polypeptide reads, in one-letter code: 1-acylglycerol-3-phosphate O-acyltransferase (418 aa).

In terms of domain architecture, AB hydrolase-1 spans 121–251 (PTLVMVHGYG…RATWKGAVLN (131 aa)). The GXSXG signature appears at 197-201 (GHSFG). Positions 379–384 (HFVFID) match the HXXXXD motif motif.

This sequence belongs to the peptidase S33 family. ABHD4/ABHD5 subfamily.

The protein localises to the cytoplasm. The enzyme catalyses a 1-acyl-sn-glycero-3-phosphate + an acyl-CoA = a 1,2-diacyl-sn-glycero-3-phosphate + CoA. In terms of biological role, lysophosphatidic acid acyltransferase which functions in phosphatidic acid biosynthesis. Is highly specific for lysophosphatidic acid and able to use different acyl-CoA donors. May regulate neutral lipid accumulation and participate in the regulation of lipid turnover in vegetative cells. Possesses additional triacylglycerol lipase and phospholipase A2 activities in vitro. Is not active as esterase or lysophospholipase. The polypeptide is 1-acylglycerol-3-phosphate O-acyltransferase (Arabidopsis thaliana (Mouse-ear cress)).